A 154-amino-acid polypeptide reads, in one-letter code: Aspartate carbamoyltransferase regulatory chain (154 aa).

Zn(2+)-binding residues include Cys-109, Cys-114, Cys-138, and Cys-141.

It belongs to the PyrI family. As to quaternary structure, contains catalytic and regulatory chains. Zn(2+) is required as a cofactor.

Involved in allosteric regulation of aspartate carbamoyltransferase. This Aliivibrio fischeri (strain ATCC 700601 / ES114) (Vibrio fischeri) protein is Aspartate carbamoyltransferase regulatory chain.